Consider the following 210-residue polypeptide: Thiamine-phosphate synthase (210 aa).

Residues 38–42 (QLREK) and asparagine 70 contribute to the 4-amino-2-methyl-5-(diphosphooxymethyl)pyrimidine site. Positions 71 and 90 each coordinate Mg(2+). Serine 109 is a 4-amino-2-methyl-5-(diphosphooxymethyl)pyrimidine binding site. 139–141 (TPT) provides a ligand contact to 2-[(2R,5Z)-2-carboxy-4-methylthiazol-5(2H)-ylidene]ethyl phosphate. Lysine 142 contacts 4-amino-2-methyl-5-(diphosphooxymethyl)pyrimidine. Residues glycine 170 and 190–191 (VS) each bind 2-[(2R,5Z)-2-carboxy-4-methylthiazol-5(2H)-ylidene]ethyl phosphate.

This sequence belongs to the thiamine-phosphate synthase family. The cofactor is Mg(2+).

It carries out the reaction 2-[(2R,5Z)-2-carboxy-4-methylthiazol-5(2H)-ylidene]ethyl phosphate + 4-amino-2-methyl-5-(diphosphooxymethyl)pyrimidine + 2 H(+) = thiamine phosphate + CO2 + diphosphate. The enzyme catalyses 2-(2-carboxy-4-methylthiazol-5-yl)ethyl phosphate + 4-amino-2-methyl-5-(diphosphooxymethyl)pyrimidine + 2 H(+) = thiamine phosphate + CO2 + diphosphate. It catalyses the reaction 4-methyl-5-(2-phosphooxyethyl)-thiazole + 4-amino-2-methyl-5-(diphosphooxymethyl)pyrimidine + H(+) = thiamine phosphate + diphosphate. It functions in the pathway cofactor biosynthesis; thiamine diphosphate biosynthesis; thiamine phosphate from 4-amino-2-methyl-5-diphosphomethylpyrimidine and 4-methyl-5-(2-phosphoethyl)-thiazole: step 1/1. Functionally, condenses 4-methyl-5-(beta-hydroxyethyl)thiazole monophosphate (THZ-P) and 2-methyl-4-amino-5-hydroxymethyl pyrimidine pyrophosphate (HMP-PP) to form thiamine monophosphate (TMP). The polypeptide is Thiamine-phosphate synthase (Leptospira biflexa serovar Patoc (strain Patoc 1 / Ames)).